The chain runs to 319 residues: ATP-dependent 6-phosphofructokinase (319 aa).

Residue Gly-11 coordinates ATP. An ADP-binding site is contributed by 21 to 25 (RAVVR). Residues 72 to 73 (RC) and 102 to 105 (GDGS) each bind ATP. Asp-103 contributes to the Mg(2+) binding site. 125–127 (TID) serves as a coordination point for substrate. Asp-127 acts as the Proton acceptor in catalysis. Arg-154 lines the ADP pocket. 169–171 (MGR) is a binding site for substrate. Residues 185–187 (GAE), Arg-211, and 213–215 (KKH) each bind ADP. Residues Glu-222, Arg-243, and 249 to 252 (HIQR) each bind substrate.

The protein belongs to the phosphofructokinase type A (PFKA) family. ATP-dependent PFK group I subfamily. Prokaryotic clade 'B1' sub-subfamily. Homotetramer. Requires Mg(2+) as cofactor.

It is found in the cytoplasm. The catalysed reaction is beta-D-fructose 6-phosphate + ATP = beta-D-fructose 1,6-bisphosphate + ADP + H(+). The protein operates within carbohydrate degradation; glycolysis; D-glyceraldehyde 3-phosphate and glycerone phosphate from D-glucose: step 3/4. Allosterically activated by ADP and other diphosphonucleosides, and allosterically inhibited by phosphoenolpyruvate. Catalyzes the phosphorylation of D-fructose 6-phosphate to fructose 1,6-bisphosphate by ATP, the first committing step of glycolysis. This is ATP-dependent 6-phosphofructokinase from Lysinibacillus sphaericus (Bacillus sphaericus).